The following is a 596-amino-acid chain: MATLSMQVSTLSKQVKNLNTFGMGSASKLPMVARRVSTIRLRPICSASLQVEEKTRRSGNYQAPVWNNDFIQSFSTDKYKDEKFLKKKEELIAQVKILLNTKMEAVKQLELIEDLRNLGLTYYFEDEFKKILTSIYNEHKGFKNEQVGDLYFTSLAFRLLRLHGFDVSEDVFNFFKNEDGSDFKASLGENTKDVLELYEASFLIRVGEVTLEQARVFSTKILEKKVEEGIKDEKLLAWIQHSLALPLHWRIQRLEARWFLDAYKARKDMNPIIFELGKIDFHIIQETQLQEVQEVSQWWTNTNLAEKLPFVRDRIVECYFWALGLFEPHEYGYQRKMAAIIITFVTIIDDVYDVYGTLDELQLFTDAIRTWDFESISTLPYYMQVCYLALYTYASELAYDILKDQGFNSISYLQRSWLSLVEGFFQEAKWYYAGYTPTLAEYLENAKVSISSPTIISQVYFTLPNSTERTVVENVYGYHNILYLSGMILRLADDLGTTQFELKRGDVQKAIQCYMNDNNATEQEGTEHVKYLLREAWQEMNSAMADPDCPLSEDLVFAAANLGRASQFIYLDGDGHGVQHSEIHNQMGGLIFEPYV.

A chloroplast-targeting transit peptide spans 1–46 (MATLSMQVSTLSKQVKNLNTFGMGSASKLPMVARRVSTIRLRPICS). Mn(2+) contacts are provided by D349 and D353. A DDXXD motif motif is present at residues 349 to 353 (DDVYD). Homodimerization stretches follow at residues 355–361 (YGTLDEL) and 427–464 (EAKWYYAGYTPTLAEYLENAKVSISSPTIISQVYFTLP). Residues D493 and E501 each coordinate Mn(2+).

The protein belongs to the terpene synthase family. As to quaternary structure, homodimer. Requires Mn(2+) as cofactor. Mg(2+) serves as cofactor.

It localises to the plastid. Its subcellular location is the chloroplast. Its pathway is secondary metabolite biosynthesis; terpenoid biosynthesis. In terms of biological role, putative monoterpene synthase. This Thymus vulgaris (Thyme) protein is Putative terpene synthase 3, chloroplastic.